We begin with the raw amino-acid sequence, 66 residues long: Conotoxin Ca5.2 (66 aa).

An N-terminal signal peptide occupies residues 1 to 22 (MRCVPVFLILLGLIASAPSVDA). The propeptide occupies 23–48 (RPQTKDDALASFHDSAKRHLQRLVNA). Phe-62 carries the phenylalanine amide modification.

Belongs to the conotoxin T superfamily. Contains 2 disulfide bonds that can be either 'C1-C3, C2-C4' or 'C1-C4, C2-C3', since these disulfide connectivities have been observed for conotoxins with cysteine framework V (for examples, see AC P0DQQ7 and AC P81755). As to expression, expressed by the venom duct.

It is found in the secreted. This chain is Conotoxin Ca5.2, found in Conus caracteristicus (Characteristic cone).